Consider the following 523-residue polypeptide: Calcium-dependent protein kinase 34 (523 aa).

Residues 1–60 (MGNCCSHGRDSDDNKEEPRPENGGGGVGAAEASVRASKHPPASPPPATKQGPIGPVLGRP) form a disordered region. A lipid anchor (N-myristoyl glycine) is attached at G2. Residues 7-20 (HGRDSDDNKEEPRP) are compositionally biased toward basic and acidic residues. Residues 68 to 326 (YTLGKELGRG…AAQVLNHPWI (259 aa)) enclose the Protein kinase domain. ATP contacts are provided by residues 74 to 82 (LGRGQFGVT) and K97. The active-site Proton acceptor is D192. At S232 the chain carries Phosphoserine. Positions 332 to 362 (APDVPLDNAVMSRLKQFKAMNNFKKVALRVI) are autoinhibitory domain. 4 EF-hand domains span residues 369 to 404 (EEIMGLKEMFKGMDTDNSGTITLEELRQGLAKQGTR), 405 to 440 (LSEYEVQQLMEAADADGNGTIDYGEFIAATMHINRL), 441 to 476 (DREEHLYSAFQHFDKDNSGYITTEELEQALREFGMN), and 480 to 511 (DIKEIISEVDGDNDGRINYEEFVAMMRKGNPD). Ca(2+) contacts are provided by D382, D384, S386, T388, E393, D418, D420, N422, T424, E429, D454, D456, S458, Y460, E465, D489, D491, D493, R495, and E500.

Belongs to the protein kinase superfamily. Ser/Thr protein kinase family. CDPK subfamily.

The protein resides in the membrane. It catalyses the reaction L-seryl-[protein] + ATP = O-phospho-L-seryl-[protein] + ADP + H(+). It carries out the reaction L-threonyl-[protein] + ATP = O-phospho-L-threonyl-[protein] + ADP + H(+). Its activity is regulated as follows. Activated by calcium. Autophosphorylation may play an important role in the regulation of the kinase activity. Its function is as follows. May play a role in signal transduction pathways that involve calcium as a second messenger. This is Calcium-dependent protein kinase 34 (CPK34) from Arabidopsis thaliana (Mouse-ear cress).